The sequence spans 277 residues: Phosphoenolpyruvate synthase regulatory protein (277 aa).

An ADP-binding site is contributed by 157–164; the sequence is GVSRCGKT.

This sequence belongs to the pyruvate, phosphate/water dikinase regulatory protein family. PSRP subfamily.

The enzyme catalyses [pyruvate, water dikinase] + ADP = [pyruvate, water dikinase]-phosphate + AMP + H(+). The catalysed reaction is [pyruvate, water dikinase]-phosphate + phosphate + H(+) = [pyruvate, water dikinase] + diphosphate. In terms of biological role, bifunctional serine/threonine kinase and phosphorylase involved in the regulation of the phosphoenolpyruvate synthase (PEPS) by catalyzing its phosphorylation/dephosphorylation. The chain is Phosphoenolpyruvate synthase regulatory protein from Salmonella gallinarum (strain 287/91 / NCTC 13346).